A 129-amino-acid chain; its full sequence is MKSVQFCFLFCCWRVICCKSCELTNITITVEKEECRFCMSINATWCAGYCYTRDLVYKDPARPNNQKTCTFKELVYETVKVPGCAHQADSLYTYPVATECHCGKCDSDSTDCTVQGLGPSYCSFSEMKE.

The first 18 residues, 1-18 (MKSVQFCFLFCCWRVICC), serve as a signal peptide directing secretion. 6 cysteine pairs are disulfide-bonded: C21/C69, C35/C84, C38/C122, C46/C100, C50/C102, and C105/C112. N-linked (GlcNAc...) asparagine glycans are attached at residues N25 and N42.

This sequence belongs to the glycoprotein hormones subunit beta family. As to quaternary structure, heterodimer. The active follitropin is a heterodimer composed of an alpha chain/CGA shared with other hormones and a unique beta chain/FSHB shown here.

The protein resides in the secreted. In terms of biological role, together with the alpha chain CGA constitutes follitropin, the follicle-stimulating hormone, and provides its biological specificity to the hormone heterodimer. Binds FSHR, a G protein-coupled receptor, on target cells to activate downstream signaling pathways. Follitropin is involved in follicle development and spermatogenesis in reproductive organs. The polypeptide is Follitropin subunit beta (FSHB) (Panthera tigris altaica (Siberian tiger)).